Consider the following 299-residue polypeptide: Transcription elongation factor A protein 2 (299 aa).

The TFIIS N-terminal domain maps to 5-82 (EEIARIARRL…KSWKKLLDVS (78 aa)). Lys-57 is covalently cross-linked (Glycyl lysine isopeptide (Lys-Gly) (interchain with G-Cter in ubiquitin)). Residues Ser-59 and Ser-100 each carry the phosphoserine modification. A disordered region spans residues 83 to 126 (DGKSRDQGRGTPLPTSSSKDASGTTDLSCKKPDPPRTSSTPRIT). Positions 95 to 109 (LPTSSSKDASGTTDL) are enriched in polar residues. The 117-residue stretch at 138–254 (VRNKCREMLT…EHQMARTGGT (117 aa)) folds into the TFIIS central domain. The segment at 257-297 (DLFTCNKCRKKNCTYTQVQTRSSDEPMTTYVVCNECGNRWK) adopts a TFIIS-type zinc-finger fold. Positions 261, 264, 289, and 292 each coordinate Zn(2+).

Belongs to the TFS-II family. As to quaternary structure, interacts with the basal transcription factor GTF2B. Interacts with REXO1. As to expression, testis specific.

Its subcellular location is the nucleus. Necessary for efficient RNA polymerase II transcription elongation past template-encoded arresting sites. The arresting sites in DNA have the property of trapping a certain fraction of elongating RNA polymerases that pass through, resulting in locked ternary complexes. Cleavage of the nascent transcript by S-II allows the resumption of elongation from the new 3'-terminus. This is Transcription elongation factor A protein 2 (Tcea2) from Rattus norvegicus (Rat).